The sequence spans 433 residues: Phosphomethylpyrimidine synthase (433 aa).

Substrate is bound by residues Asn69, Met98, Tyr127, His163, 185–187 (SRG), 226–229 (DACR), and Glu265. A Zn(2+)-binding site is contributed by His269. Tyr292 provides a ligand contact to substrate. His333 lines the Zn(2+) pocket. Residues Cys409, Cys412, and Cys416 each coordinate [4Fe-4S] cluster.

The protein belongs to the ThiC family. [4Fe-4S] cluster is required as a cofactor.

It carries out the reaction 5-amino-1-(5-phospho-beta-D-ribosyl)imidazole + S-adenosyl-L-methionine = 4-amino-2-methyl-5-(phosphooxymethyl)pyrimidine + CO + 5'-deoxyadenosine + formate + L-methionine + 3 H(+). It participates in cofactor biosynthesis; thiamine diphosphate biosynthesis. Functionally, catalyzes the synthesis of the hydroxymethylpyrimidine phosphate (HMP-P) moiety of thiamine from aminoimidazole ribotide (AIR) in a radical S-adenosyl-L-methionine (SAM)-dependent reaction. In Clostridioides difficile (strain 630) (Peptoclostridium difficile), this protein is Phosphomethylpyrimidine synthase.